A 2485-amino-acid chain; its full sequence is Tyrosine-protein phosphatase non-receptor type 13 (2485 aa).

The KIND domain occupies 3 to 190 (VSLAEALEVR…SGTDQLSCNS (188 aa)). The disordered stretch occupies residues 186–220 (LSCNSEQKPDRSQAIRDRLRGKGLPTGRSSTSDVL). Positions 192-205 (QKPDRSQAIRDRLR) are enriched in basic and acidic residues. A Phosphoserine modification is found at serine 240. The tract at residues 260–283 (SDNSGREDSENTFSPYQFKTSGPE) is disordered. Residues 270 to 279 (NTFSPYQFKT) are compositionally biased toward polar residues. Phosphoserine is present on residues serine 301 and serine 302. The interval 433 to 467 (RSEASKRFESSSGLPGVDETLSQGQSQRPSRQYET) is disordered. Residues 452-465 (TLSQGQSQRPSRQY) show a composition bias toward polar residues. Positions 469–504 (FEGNLINQEIMLKRQEEELMQLQAKMALRQSRLSLY) form a coiled coil. In terms of domain architecture, FERM spans 572–872 (RKVNIMLLNG…YQHKFQLQMR (301 aa)). Residues serine 890, serine 897, serine 908, serine 911, and serine 914 each carry the phosphoserine modification. 2 disordered regions span residues 947-975 (QNSS…DLSQ) and 995-1049 (TVAE…IEDP). Over residues 950–971 (SKEKNDKASWEEKPREMSKSYH) the composition is skewed to basic and acidic residues. The segment covering 1020-1032 (KLNNSKSVASLNR) has biased composition (polar residues). Serine 1029, serine 1033, and serine 1085 each carry phosphoserine. Positions 1033–1042 (SPERRKHESD) are enriched in basic and acidic residues. The region spanning 1093 to 1178 (LVNLKKDAKY…EDVTLVISQP (86 aa)) is the PDZ 1 domain. Disordered stretches follow at residues 1227–1258 (HISE…SLSQ) and 1273–1362 (TWQE…SPPK). Composition is skewed to polar residues over residues 1243–1258 (SLSS…SLSQ), 1273–1288 (TWQE…SVIS), and 1327–1359 (TYSS…FSSS). PDZ domains are found at residues 1368–1452 (EVEL…LEKG) and 1501–1588 (EVKL…LCRP). Residues 1608-1630 (AQVLPNSSKDSSQPSCVEQSTSS) show a composition bias toward polar residues. Disordered regions lie at residues 1608–1665 (AQVL…DLVT) and 1715–1751 (PNKP…SSMD). Over residues 1736–1749 (QSYQPQSESASSSS) the composition is skewed to low complexity. PDZ domains lie at 1788 to 1868 (LITL…IGRV) and 1882 to 1965 (PDIT…ATRN). A disordered region spans residues 1971-1996 (PSSKRSAVSAPKSTKGNGSYSVGSCS). Residues 1973–1996 (SKRSAVSAPKSTKGNGSYSVGSCS) are compositionally biased toward polar residues. Positions 2213-2467 (PSKELENLQE…IFCYQVILYV (255 aa)) constitute a Tyrosine-protein phosphatase domain. Substrate contacts are provided by residues aspartate 2378, 2408-2414 (CSAGIGR), and glutamine 2452. Cysteine 2408 functions as the Phosphocysteine intermediate in the catalytic mechanism. A substrate region spans residues 2408–2414 (CSAGIGR).

Belongs to the protein-tyrosine phosphatase family. Non-receptor class subfamily. As to quaternary structure, interacts (via the first PDZ domain) with PLEKHA1 and PLEKHA2. Interacts (via the second PDZ domain) with TNFRSF6 (Fas receptor) (via C-terminus). Interacts (via the second PDZ domain) with TRIP6 (via the third LIM domain and C-terminus). Interacts (via the third PDZ domain) with NGFR (via C-terminal SVP motif) and PKN2 (via C-terminus). Interacts (via the second or fourth PDZ domains) with PDLIM4 (via C-terminus only or via combined C-terminus and LIM domain, but not LIM domain only). Found in a complex with PDLIM4 and TRIP6. Interacts with PDLIM4; this interaction results in dephosphorylation of SRC 'Tyr-419' by this protein leading to its inactivation. Interacts with BRD7. Interacts with RAPGEF6. Interacts with ARHGAP29. Interacts with PIK3R2; dephosphorylates PIK3R2. Interacts with FBXL2. Interacts (via the FERM domain) with ENTR1. Found in a complex with ENTR1, PTPN13 and GIT1. Expressed in keratinocytes (at protein level). Present in most tissues with the exception of the liver and skeletal muscle. Most abundant in lung, kidney and fetal brain.

It localises to the cytoplasm. The protein localises to the cytoskeleton. Its subcellular location is the nucleus. It is found in the cell projection. The protein resides in the lamellipodium. It carries out the reaction O-phospho-L-tyrosyl-[protein] + H2O = L-tyrosyl-[protein] + phosphate. In terms of biological role, tyrosine phosphatase which negatively regulates FAS-induced apoptosis and NGFR-mediated pro-apoptotic signaling. May regulate phosphoinositide 3-kinase (PI3K) signaling through dephosphorylation of PIK3R2. In Homo sapiens (Human), this protein is Tyrosine-protein phosphatase non-receptor type 13 (PTPN13).